A 710-amino-acid chain; its full sequence is Prolyl endopeptidase (710 aa).

Methionine 1 carries the post-translational modification N-acetylmethionine. Lysine 157 bears the N6-acetyllysine mark. Active-site charge relay system residues include serine 554, aspartate 641, and histidine 680.

The protein belongs to the peptidase S9A family. In terms of tissue distribution, expressed in all tissues tested: uterus, kidney, heart, lung, small intestine, smooth muscle, liver, spleen, thymus, adrenal, pituitary and whole brain.

It is found in the cytoplasm. It carries out the reaction Hydrolysis of Pro-|-Xaa &gt;&gt; Ala-|-Xaa in oligopeptides.. Its activity is regulated as follows. Inhibited by DFP, Z-Pro-prolinal and poststatin, but not by PMSF, SBTI, EDTA, leupeptin, E-64 and pepstatin. In terms of biological role, cleaves peptide bonds on the C-terminal side of prolyl residues within peptides that are up to approximately 30 amino acids long. Has high activity on the succinyl- (suc-) peptide-4-methylcoumaryl-7-amide (MCA) substrates suc-Gly-Pro-Leu-Gly-Pro-MCA, suc-Gly-Pro-MCA and suc-Ala-Ala-Ala-MCA. The chain is Prolyl endopeptidase from Rattus norvegicus (Rat).